An 882-amino-acid chain; its full sequence is Apoptosis-linked gene 2-interacting protein X 1 (882 aa).

Residues 5-398 form the BRO1 domain; sequence GFLSAPLKST…VRMREATQLM (394 aa). Residues 743–882 form a disordered region; the sequence is GTNAAQSPAN…GGGGGANPFQ (140 aa). Positions 752–763 are enriched in pro residues; it reads NAPPRPPPPRPA. 2 stretches are compositionally biased toward low complexity: residues 791 to 830 and 847 to 871; these read NPYQ…QYQP and QQQW…QNQQ. Positions 872–882 are enriched in gly residues; that stretch reads QGGGGGANPFQ.

In terms of biological role, required for lin-12 degradation after it has been internalised in the vulval precursor cells. This Caenorhabditis elegans protein is Apoptosis-linked gene 2-interacting protein X 1 (alx-1).